The chain runs to 270 residues: Protein-ADP-ribose hydrolase (270 aa).

Positions 73 to 267 (VSVKDCQKTN…LYDTYLQKEN (195 aa)) constitute a Macro domain. Residues Asp92, Ile93, and Asn106 each contribute to the ADP-D-ribose site. Zn(2+)-binding residues include Cys112, His117, and Cys119. ADP-D-ribose contacts are provided by Cys119, Ile120, Asp121, Ser212, Thr213, Gly214, Glu215, and Phe216.

The protein belongs to the MacroD-type family. Zn-Macro subfamily. The cofactor is Zn(2+).

It catalyses the reaction 4-O-(ADP-D-ribosyl)-L-aspartyl-[protein] + H2O = L-aspartyl-[protein] + ADP-D-ribose + H(+). In terms of biological role, ADP-ribosylhydrolase that specifically reverses the SirTM-mediated mono-ADP-ribosylation at an asparatate residue of GcvH-L, by releasing ADP-ribose from the target protein. May play a role in the regulation of the response to host-induced oxidative stress. This Streptococcus pyogenes serotype M3 (strain ATCC BAA-595 / MGAS315) protein is Protein-ADP-ribose hydrolase.